The primary structure comprises 555 residues: Potassium-transporting ATPase potassium-binding subunit (555 aa).

A run of 10 helical transmembrane segments spans residues Ile2–Ile22, Gln60–Phe80, Ile130–Phe150, Val173–Thr193, Met246–Tyr266, Ile278–Glu298, Ala374–Val394, Leu412–Leu432, Leu483–Leu503, and Gly525–Leu545.

Belongs to the KdpA family. In terms of assembly, the system is composed of three essential subunits: KdpA, KdpB and KdpC.

It is found in the cell membrane. In terms of biological role, part of the high-affinity ATP-driven potassium transport (or Kdp) system, which catalyzes the hydrolysis of ATP coupled with the electrogenic transport of potassium into the cytoplasm. This subunit binds the extracellular potassium ions and delivers the ions to the membrane domain of KdpB through an intramembrane tunnel. This chain is Potassium-transporting ATPase potassium-binding subunit, found in Bacillus cereus (strain Q1).